We begin with the raw amino-acid sequence, 503 residues long: Mitochondrial antiviral-signaling protein (503 aa).

The Cytoplasmic segment spans residues 1-478 (MTFAEDKTYK…HCASSMPWAK (478 aa)). Residues K7 and K10 each participate in a glycyl lysine isopeptide (Lys-Gly) (interchain with G-Cter in ubiquitin) cross-link. The region spanning 10–77 (KYIRDNHSKF…WVEVFIRALQ (68 aa)) is the CARD domain. A required for interaction with NLRX1 region spans residues 10 to 77 (KYIRDNHSKF…WVEVFIRALQ (68 aa)). Residue C79 is the site of S-palmitoyl cysteine attachment. A disordered region spans residues 119–202 (GPSAFAPGHN…HQEQEPELGG (84 aa)). The interaction with TRAF2 stretch occupies residues 143 to 147 (PVQDT). Positions 145 to 166 (QDTQPPESPVENSEQLLQTNSG) are enriched in polar residues. A phosphoserine mark is found at S152, S157, S172, S186, and S220. Residues 153 to 158 (PVENSE) are interaction with TRAF6 1. Positions 178-189 (PSPNQQALSPQP) are enriched in polar residues. R234 is subject to Asymmetric dimethylarginine. A phosphoserine mark is found at S251 and S256. K302 participates in a covalent cross-link: Glycyl lysine isopeptide (Lys-Gly) (interchain with G-Cter in ubiquitin). The interaction with DHX33 stretch occupies residues 337 to 503 (PSRVPASVAK…MLYRSRRLAQ (167 aa)). Residues 346–398 (KAPANTIPPERNSKQAKETPEGPATKVTTGGNQTGPNSSIRSLHSGPEMSKPG) form a disordered region. Positions 356-365 (RNSKQAKETP) are enriched in basic and acidic residues. Over residues 371–387 (KVTTGGNQTGPNSSIRS) the composition is skewed to polar residues. S384 carries the post-translational modification Phosphoserine. Positions 415-418 (LAIS) match the pLxIS motif motif. S418 bears the Phosphoserine; by TBK1 mark. The interval 431–436 (PEENEY) is interaction with TRAF6 2. The segment at 446 to 466 (SPSADLLGSPEPLATQQPQEE) is disordered. The helical transmembrane segment at 479–496 (WLGATSALLAVFLAVMLY) threads the bilayer. Topologically, residues 497-503 (RSRRLAQ) are mitochondrial intermembrane.

In terms of assembly, self-associates and polymerizes (via CARD domains) to form 400 nM long three-stranded helical filaments on mitochondria, filament nucleation requires interaction with RIGI whose CARD domains act as a template for filament assembly. Interacts with RIGI, IFIH1/MDA5, TRAF2, TRAF6 and C1QBP. May interact with FADD, RIPK1, IKBKE, CHUK and IKBKB. Interacts (when phosphorylated) with IRF3; following activation and phosphorylation on the pLxIS motif by TBK1, recruits IRF3. Interacts with NLRX1. Interaction with NLRX1 requires the CARD domain. Interacts with PSMA7. Interacts with TRAFD1. Interacts (via C-terminus) with PCBP2 in a complex containing MAVS/IPS1, PCBP2 and ITCH. Interacts with CYLD. Interacts with SRC. Interacts with DHX58/LGP2 and IKBKE. Interacts with STING1. Interacts with IFIT3 (via N-terminus). Interacts with TBK1 only in the presence of IFIT3. Interacts with TTLL12; the interaction prevents MAVS binding to TBK1 and IKBKE. Interacts with MUL1. Interacts with ANKRD17. Interacts with NDFIP1. Interacts with SMURF1; the interaction is mediated by NDFIP1 and leads to MAVS ubiquitination and degradation. Interacts (via C-terminus) with GPATCH3; the interaction is markedly increased upon viral infection. Directly interacts (via CARD domain) with ATG5 and ATG12, either as ATG5 and ATG12 monomers or as ATG12-ATG5 conjugates. Interacts with DHX33 (via the helicase C-terminal domain). Interacts with DDX3X (via C-terminus); this interaction may occur rapidly, but transiently after viral infection. The interaction with DDX3X potentiates MAVS-mediated IFNB induction. Conversely inhibition of this interaction prevents MAVS-mediated IFNB induction. Transiently interacts with TRAF3 early during viral infection. Interacts with CLPB. Interacts with TRAF3IP3. Interacts with TOMM70; the interaction is enhanced by virus infection. Interacts with ZNFX1. Interacts with DHX15. Interacts with N4BP3; this interaction promotes the polyubiquitination of MAVS. Interacts with TAX1BP1; this interaction induces MAVS polyubiquitination. Interacts with NLRP3; promoting NLRP3 recruitment to mitochondria and activation of the NLRP3 inflammasome. Interacts with ECSIT; this interaction bridges RIGI to the MAVS complex at the mitochondrion. Interacts with UBL7; this interaction promotes MAVS 'Lys-27'-linked ubiquitination leading to type I interferon production. Interacts (via transmembrane domain) with SMIM30/MAVI1 (via transmembrane domain); the interaction disrupts MAVS interaction with RIGI and inhibits MAVS aggregation, resulting in the repression of type I interferon signaling and innate immune responses. In terms of processing, following activation, phosphorylated by TBK1 at Ser-418 in the pLxIS motif. The phosphorylated pLxIS motif constitutes an IRF3-binding motif, leading to recruitment of the transcription factor IRF3 to induce type-I interferons and other cytokines. Ubiquitinated. Undergoes 'Lys-48'-linked polyubiquitination catalyzed by ITCH; ITCH-dependent polyubiquitination is mediated by the interaction with PCBP2 and leads to MAVS/IPS1 proteasomal degradation. Ubiquitinated by RNF125, leading to its degradation by the proteasome. Undergoes 'Lys-48'-linked ubiquitination catalyzed by SMURF1. Undergoes 'Lys-48'-linked ubiquitination catalyzed by MARCHF5 at Lys-7, leading to proteasomal degradation. Ubiquitinated via 'Lys-63'-linked ubiquitination at Lys-10 by TRIM31, promoting MAVS polymerization and formation of three-stranded helical filaments on mitochondria. Undergoes 'Lys-63'-linked ubiquitination leading to enhanced interaction between MAVS and TRAF2. Undergoes 'Lys-27'-linked ubiquitination by UBE2N and TRIM21 leading to enhanced interaction between MAVS and TBK1. Deubiquitinated by USP10 leading to attenuation of RIGI-mediated MAVS aggregation and production of type I interferon. Undergoes 'Lys-48'-linked polyubiquitination catalyzed by RNF115 leading to its degradation. Post-translationally, proteolytically cleaved by apoptotic caspases during apoptosis, leading to its inactivation. Cleavage by CASP3 during virus-induced apoptosis inactivates it, preventing cytokine overproduction. In terms of processing, palmitoylated by ZHDDC4. Palmitoylation promotes MAVS stabilization and activation by inhibiting 'Lys-48'- but facilitating 'Lys-63'-linked ubiquitination.

It is found in the mitochondrion outer membrane. The protein localises to the mitochondrion. It localises to the peroxisome. Adapter required for innate immune defense against viruses. Acts downstream of DHX33, RIGI and IFIH1/MDA5, which detect intracellular dsRNA produced during viral replication, to coordinate pathways leading to the activation of NF-kappa-B, IRF3 and IRF7, and to the subsequent induction of antiviral cytokines such as IFN-beta and RANTES (CCL5). Peroxisomal and mitochondrial MAVS act sequentially to create an antiviral cellular state. Upon viral infection, peroxisomal MAVS induces the rapid interferon-independent expression of defense factors that provide short-term protection, whereas mitochondrial MAVS activates an interferon-dependent signaling pathway with delayed kinetics, which amplifies and stabilizes the antiviral response. May activate the same pathways following detection of extracellular dsRNA by TLR3. May protect cells from apoptosis. Involved in NLRP3 inflammasome activation by mediating NLRP3 recruitment to mitochondria. The sequence is that of Mitochondrial antiviral-signaling protein from Mus musculus (Mouse).